The chain runs to 327 residues: Tetraacyldisaccharide 4'-kinase (327 aa).

52–59 (TLGGAGKT) lines the ATP pocket.

The protein belongs to the LpxK family.

The enzyme catalyses a lipid A disaccharide + ATP = a lipid IVA + ADP + H(+). The protein operates within glycolipid biosynthesis; lipid IV(A) biosynthesis; lipid IV(A) from (3R)-3-hydroxytetradecanoyl-[acyl-carrier-protein] and UDP-N-acetyl-alpha-D-glucosamine: step 6/6. Its function is as follows. Transfers the gamma-phosphate of ATP to the 4'-position of a tetraacyldisaccharide 1-phosphate intermediate (termed DS-1-P) to form tetraacyldisaccharide 1,4'-bis-phosphate (lipid IVA). The polypeptide is Tetraacyldisaccharide 4'-kinase (Methylorubrum populi (strain ATCC BAA-705 / NCIMB 13946 / BJ001) (Methylobacterium populi)).